Consider the following 205-residue polypeptide: MFELQPSSIVVLVFCVLAIKVCISLIGKTTIQDRIWYLYTIGASKAGHSKFVALAQKREELVRVNKERRAISAQDEYAKWTKLNRQFDKLNSEVNDLAEATSSEKAQISKLVNLAIAATTTAPIWFSRIWYRKVVLFYLPPKVFPYYIEWVLALPFIVTGGVGLTVWMFALNSVLSSLEFLIKFYLEEPVKKPEAPAASEAQTKQ.

Over M1–I9 the chain is Lumenal. The chain crosses the membrane as a helical span at residues V10–T29. The Cytoplasmic segment spans residues T30–I116. Positions A53–S103 form a coiled coil. A helical membrane pass occupies residues A117 to F137. At Y138–G161 the chain is on the lumenal side. The helical transmembrane segment at V162–L178 threads the bilayer. At E179 to Q205 the chain is on the cytoplasmic side.

It belongs to the WRB/GET1 family. In terms of assembly, component of the Golgi to ER traffic (GET) complex, which is composed of GET1, GET2 and GET3. Within the complex, GET1 and GET2 form a heterotetramer which is stabilized by phosphatidylinositol binding and which binds to the GET3 homodimer.

It is found in the endoplasmic reticulum membrane. The protein localises to the golgi apparatus membrane. Its function is as follows. Required for the post-translational delivery of tail-anchored (TA) proteins to the endoplasmic reticulum. Together with GET2, acts as a membrane receptor for soluble GET3, which recognizes and selectively binds the transmembrane domain of TA proteins in the cytosol. The GET complex cooperates with the HDEL receptor ERD2 to mediate the ATP-dependent retrieval of resident ER proteins that contain a C-terminal H-D-E-L retention signal from the Golgi to the ER. The polypeptide is Golgi to ER traffic protein 1 (Clavispora lusitaniae (strain ATCC 42720) (Yeast)).